Consider the following 498-residue polypeptide: ATP synthase subunit beta, chloroplastic (498 aa).

Residue 172 to 179 (GGAGVGKT) participates in ATP binding.

This sequence belongs to the ATPase alpha/beta chains family. In terms of assembly, F-type ATPases have 2 components, CF(1) - the catalytic core - and CF(0) - the membrane proton channel. CF(1) has five subunits: alpha(3), beta(3), gamma(1), delta(1), epsilon(1). CF(0) has four main subunits: a(1), b(1), b'(1) and c(9-12).

It is found in the plastid. It localises to the chloroplast thylakoid membrane. The catalysed reaction is ATP + H2O + 4 H(+)(in) = ADP + phosphate + 5 H(+)(out). Functionally, produces ATP from ADP in the presence of a proton gradient across the membrane. The catalytic sites are hosted primarily by the beta subunits. This chain is ATP synthase subunit beta, chloroplastic, found in Pelargonium hortorum (Common geranium).